The primary structure comprises 270 residues: Small ribosomal subunit protein eS1 (270 aa).

Disordered regions lie at residues 1–21 and 238–270; these read MAVG…KKKV and GGGK…QESV.

It belongs to the eukaryotic ribosomal protein eS1 family. As to quaternary structure, component of the small ribosomal subunit. Mature ribosomes consist of a small (40S) and a large (60S) subunit. The 40S subunit contains about 33 different proteins and 1 molecule of RNA (18S). The 60S subunit contains about 49 different proteins and 3 molecules of RNA (28S, 5.8S and 5S).

It localises to the cytoplasm. The sequence is that of Small ribosomal subunit protein eS1 from Aedes aegypti (Yellowfever mosquito).